Consider the following 526-residue polypeptide: Acid-sensing ion channel 1 (526 aa).

Residues 1 to 49 (MELKTEEEEVGGVQPVSIQAFASSSTLHGLAHIFSYERLSLKRALWALC) are Cytoplasmic-facing. A helical membrane pass occupies residues 50–66 (FLGSLAVLLCVCTERVQ). At 67–425 (YYFCYHHVTK…ETIEQKKAYE (359 aa)) the chain is on the extracellular side. 7 disulfide bridges follow: Cys-93–Cys-194, Cys-172–Cys-179, Cys-290–Cys-365, Cys-308–Cys-361, Cys-312–Cys-359, Cys-321–Cys-343, and Cys-323–Cys-335. Asn-366 and Asn-393 each carry an N-linked (GlcNAc...) asparagine glycan. The discontinuously helical transmembrane segment at 426-456 (IAGLLGDIGGQMGLFIGASILTVLELFDYAY) threads the bilayer. The GAS motif; ion selectivity filter signature appears at 442–444 (GAS). Residues 457 to 526 (EVIKHRLCRR…ARGTFEDFTC (70 aa)) are Cytoplasmic-facing. Residue Ser-477 is modified to Phosphoserine; by PKA. Residue Ser-497 is modified to Phosphoserine.

Belongs to the amiloride-sensitive sodium channel (TC 1.A.6) family. ASIC1 subfamily. As to quaternary structure, homotrimer. Heterotrimer; with other ASIC proteins producing channel with different properties. Interacts with PICK1; regulates ASIC1 clustering in membranes. Interacts with STOM; alters heterotrimeric ASIC channels activity. Post-translationally, pH-gating could be regulated by serine proteases. In terms of processing, phosphorylation by PKA regulates interaction with PICK1 and subcellular localization. Phosphorylation by PKC may regulate the channel. In terms of tissue distribution, expressed in brain areas receiving strong excitatory corticofugal input. In hippocampus, expressed in the hilus of the dentate gyrus. In the cerebral cortex expressed in anterior and posterior cingulate cortex, sensory and motor cortices. In the sensory cortex strongest expression is detected in the whisker barrel field. In sensorimotor and cingulate cortex expression is elevated in layer III. Also expressed in basal ganglia, striatum, ventral pallidum, olfactory tubercle, and nucleus accumbens. Weakly expressed in thalamus with the exception of the habenula and the medial septal nuclei. In olfactory bulb, preferentially expressed in the glomerular layer, within glomeruli. Expressed in cerebellum in the molecular and granule cell layers. Strongly expressed in amygdala complex, particularly in the lateral and basolateral nuclei. Isoform 1 is more abundant in brain compared to isoform 2 (at protein level). Expressed in the nodose ganglion and dorsal root ganglion. Expressed in dendritic spine cells.

The protein localises to the cell membrane. It is found in the postsynaptic cell membrane. The protein resides in the cell projection. It localises to the dendrite. The enzyme catalyses Na(+)(in) = Na(+)(out). It catalyses the reaction Ca(2+)(in) = Ca(2+)(out). It carries out the reaction K(+)(in) = K(+)(out). The catalysed reaction is Li(+)(in) = Li(+)(out). With respect to regulation, inhibited by the diuretic drug amiloride. Its activity is regulated as follows. The activity of the channel is sensitive to rapid decrease in osmotic pressure. In terms of biological role, forms voltage-independent, pH-gated trimeric sodium channels that act as postsynaptic excitatory receptors in the nervous system, playing a crucial role in regulating synaptic plasticity, learning, and memory. Upon extracellular pH drop this channel elicits transient, fast activating, and completely desensitizing inward currents. Displays high selectivity for sodium ions but can also permit the permeation of other cations. Regulates more or less directly intracellular calcium concentration and CaMKII phosphorylation, and thereby the density of dendritic spines. Modulates neuronal activity in the circuits underlying innate fear. Has high selectivity for sodium ions but is also potentially permeable to other cations including potassium. Could function in cochlear mechanoelectrical transduction. This Mus musculus (Mouse) protein is Acid-sensing ion channel 1.